Consider the following 440-residue polypeptide: Adenylosuccinate synthetase (440 aa).

Residues 14-20 (GDEGKGK) and 42-44 (GHT) contribute to the GTP site. D15 acts as the Proton acceptor in catalysis. Mg(2+) contacts are provided by D15 and G42. IMP-binding positions include 15-18 (DEGK), 40-43 (NAGH), T131, R145, Q226, T241, and R313. H43 acts as the Proton donor in catalysis. 309-315 (ATTGRQR) serves as a coordination point for substrate. Residues R315, 341-343 (KLD), and 423-425 (STG) each bind GTP.

This sequence belongs to the adenylosuccinate synthetase family. Homodimer. Mg(2+) serves as cofactor.

It localises to the cytoplasm. It catalyses the reaction IMP + L-aspartate + GTP = N(6)-(1,2-dicarboxyethyl)-AMP + GDP + phosphate + 2 H(+). The protein operates within purine metabolism; AMP biosynthesis via de novo pathway; AMP from IMP: step 1/2. Plays an important role in the de novo pathway of purine nucleotide biosynthesis. Catalyzes the first committed step in the biosynthesis of AMP from IMP. The protein is Adenylosuccinate synthetase of Hydrogenovibrio crunogenus (strain DSM 25203 / XCL-2) (Thiomicrospira crunogena).